A 345-amino-acid chain; its full sequence is MIETDKLFGAAPERRIVTPQRASEQEEALERALRPKLLDEYVGQKKAREQLEIFIEAAKKRGEALDHVLLFGPPGLGKTTLAHIVAREMGVNLRQTSGPVLERAGDLAALLTNLEPHDVLFIDEIHRLSPVVEEILYPALEDYQIDIMIGEGPAARSVKIDLPPFTLVGATTRAGMLTNPLRDRFGIVARLEFYNAEELTRIVSRSAGLLNVQLSDDGAFEVAKRSRGTPRIANRLLRRVRDYAEVKSDGVVTMAVADAALAMLDVDPAGLDVMDRKLLQAILEKFSGGPVGLDNVAAAIGESTDTIEDVIEPFLIQQGYLQRTPRGRMATAQAYLHFGLPVKDA.

Residues T4–Y194 are large ATPase domain (RuvB-L). ATP-binding positions include L33, R34, G75, K78, T79, T80, E141–Y143, R184, Y194, and R231. A Mg(2+)-binding site is contributed by T79. The tract at residues N195 to D265 is small ATPAse domain (RuvB-S). The tract at residues P268–A345 is head domain (RuvB-H). DNA is bound by residues R323 and R328.

This sequence belongs to the RuvB family. As to quaternary structure, homohexamer. Forms an RuvA(8)-RuvB(12)-Holliday junction (HJ) complex. HJ DNA is sandwiched between 2 RuvA tetramers; dsDNA enters through RuvA and exits via RuvB. An RuvB hexamer assembles on each DNA strand where it exits the tetramer. Each RuvB hexamer is contacted by two RuvA subunits (via domain III) on 2 adjacent RuvB subunits; this complex drives branch migration. In the full resolvosome a probable DNA-RuvA(4)-RuvB(12)-RuvC(2) complex forms which resolves the HJ.

It is found in the cytoplasm. It catalyses the reaction ATP + H2O = ADP + phosphate + H(+). Its function is as follows. The RuvA-RuvB-RuvC complex processes Holliday junction (HJ) DNA during genetic recombination and DNA repair, while the RuvA-RuvB complex plays an important role in the rescue of blocked DNA replication forks via replication fork reversal (RFR). RuvA specifically binds to HJ cruciform DNA, conferring on it an open structure. The RuvB hexamer acts as an ATP-dependent pump, pulling dsDNA into and through the RuvAB complex. RuvB forms 2 homohexamers on either side of HJ DNA bound by 1 or 2 RuvA tetramers; 4 subunits per hexamer contact DNA at a time. Coordinated motions by a converter formed by DNA-disengaged RuvB subunits stimulates ATP hydrolysis and nucleotide exchange. Immobilization of the converter enables RuvB to convert the ATP-contained energy into a lever motion, pulling 2 nucleotides of DNA out of the RuvA tetramer per ATP hydrolyzed, thus driving DNA branch migration. The RuvB motors rotate together with the DNA substrate, which together with the progressing nucleotide cycle form the mechanistic basis for DNA recombination by continuous HJ branch migration. Branch migration allows RuvC to scan DNA until it finds its consensus sequence, where it cleaves and resolves cruciform DNA. This is Holliday junction branch migration complex subunit RuvB from Chromobacterium violaceum (strain ATCC 12472 / DSM 30191 / JCM 1249 / CCUG 213 / NBRC 12614 / NCIMB 9131 / NCTC 9757 / MK).